Reading from the N-terminus, the 283-residue chain is D-alanine aminotransferase (283 aa).

Residue Tyr32 participates in substrate binding. Pyridoxal 5'-phosphate is bound at residue Arg51. Substrate contacts are provided by Arg99 and His101. Lys146 (proton acceptor) is an active-site residue. At Lys146 the chain carries N6-(pyridoxal phosphate)lysine. Residue Glu178 coordinates pyridoxal 5'-phosphate.

It belongs to the class-IV pyridoxal-phosphate-dependent aminotransferase family. As to quaternary structure, homodimer. Requires pyridoxal 5'-phosphate as cofactor.

The enzyme catalyses D-alanine + 2-oxoglutarate = D-glutamate + pyruvate. Functionally, acts on the D-isomers of alanine, leucine, aspartate, glutamate, aminobutyrate, norvaline and asparagine. The enzyme transfers an amino group from a substrate D-amino acid to the pyridoxal phosphate cofactor to form pyridoxamine and an alpha-keto acid in the first half-reaction. The second half-reaction is the reverse of the first, transferring the amino group from the pyridoxamine to a second alpha-keto acid to form the product D-amino acid via a ping-pong mechanism. This is an important process in the formation of D-alanine and D-glutamate, which are essential bacterial cell wall components. This Lysinibacillus sphaericus (Bacillus sphaericus) protein is D-alanine aminotransferase (dat).